We begin with the raw amino-acid sequence, 126 residues long: Small ribosomal subunit protein uS13 (126 aa).

Residues 99 to 126 (LRGQSTKNNARTRKGKRKTVANKKRVTK) are disordered. Positions 108-126 (ARTRKGKRKTVANKKRVTK) are enriched in basic residues.

The protein belongs to the universal ribosomal protein uS13 family. Part of the 30S ribosomal subunit. Forms a loose heterodimer with protein S19. Forms two bridges to the 50S subunit in the 70S ribosome.

Its function is as follows. Located at the top of the head of the 30S subunit, it contacts several helices of the 16S rRNA. In the 70S ribosome it contacts the 23S rRNA (bridge B1a) and protein L5 of the 50S subunit (bridge B1b), connecting the 2 subunits; these bridges are implicated in subunit movement. Contacts the tRNAs in the A and P-sites. This Azobacteroides pseudotrichonymphae genomovar. CFP2 protein is Small ribosomal subunit protein uS13.